The following is a 258-amino-acid chain: Aspartate/glutamate leucyltransferase (258 aa).

It belongs to the R-transferase family. Bpt subfamily.

The protein resides in the cytoplasm. The catalysed reaction is N-terminal L-glutamyl-[protein] + L-leucyl-tRNA(Leu) = N-terminal L-leucyl-L-glutamyl-[protein] + tRNA(Leu) + H(+). It catalyses the reaction N-terminal L-aspartyl-[protein] + L-leucyl-tRNA(Leu) = N-terminal L-leucyl-L-aspartyl-[protein] + tRNA(Leu) + H(+). Functions in the N-end rule pathway of protein degradation where it conjugates Leu from its aminoacyl-tRNA to the N-termini of proteins containing an N-terminal aspartate or glutamate. The chain is Aspartate/glutamate leucyltransferase from Rhizobium etli (strain ATCC 51251 / DSM 11541 / JCM 21823 / NBRC 15573 / CFN 42).